Here is a 339-residue protein sequence, read N- to C-terminus: 1-aminocyclopropane-1-carboxylate deaminase (339 aa).

An N6-(pyridoxal phosphate)lysine modification is found at lysine 52. Serine 79 (nucleophile) is an active-site residue.

This sequence belongs to the ACC deaminase/D-cysteine desulfhydrase family. In terms of assembly, homotrimer. Pyridoxal 5'-phosphate is required as a cofactor.

It carries out the reaction 1-aminocyclopropane-1-carboxylate + H2O = 2-oxobutanoate + NH4(+). Its function is as follows. Catalyzes a cyclopropane ring-opening reaction, the irreversible conversion of 1-aminocyclopropane-1-carboxylate (ACC) to ammonia and alpha-ketobutyrate. Allows growth on ACC as a nitrogen source. This chain is 1-aminocyclopropane-1-carboxylate deaminase, found in Bradyrhizobium sp. (strain BTAi1 / ATCC BAA-1182).